The following is a 245-amino-acid chain: tRNA (guanine-N(1)-)-methyltransferase (245 aa).

S-adenosyl-L-methionine is bound by residues Gly-113 and 133–138 (IGDYVL).

The protein belongs to the RNA methyltransferase TrmD family. In terms of assembly, homodimer.

The protein localises to the cytoplasm. It catalyses the reaction guanosine(37) in tRNA + S-adenosyl-L-methionine = N(1)-methylguanosine(37) in tRNA + S-adenosyl-L-homocysteine + H(+). Its function is as follows. Specifically methylates guanosine-37 in various tRNAs. The chain is tRNA (guanine-N(1)-)-methyltransferase from Oceanobacillus iheyensis (strain DSM 14371 / CIP 107618 / JCM 11309 / KCTC 3954 / HTE831).